The chain runs to 152 residues: UPF0266 membrane protein YobD (152 aa).

Helical transmembrane passes span 6-26 (LVLILFIAALLVYALYDQFIM), 45-65 (VDSVIFVGLVAILIYNNVTSH), and 67-87 (AQMTTWLLSALALMGFYIFWI).

This sequence belongs to the UPF0266 family.

The protein localises to the cell inner membrane. The sequence is that of UPF0266 membrane protein YobD from Salmonella paratyphi A (strain ATCC 9150 / SARB42).